The chain runs to 251 residues: ATP synthase subunit a 2 (251 aa).

5 helical membrane passes run 35 to 55 (GQVF…SLLA), 94 to 114 (LPFI…GSLI), 133 to 153 (INTT…AGLS), 198 to 218 (LVVA…LMAL), and 219 to 239 (GLFT…AYIH).

It belongs to the ATPase A chain family. In terms of assembly, F-type ATPases have 2 components, CF(1) - the catalytic core - and CF(0) - the membrane proton channel. CF(1) has five subunits: alpha(3), beta(3), gamma(1), delta(1), epsilon(1). CF(0) has four main subunits: a, b, b' and c.

The protein localises to the cellular thylakoid membrane. Its function is as follows. Key component of the proton channel; it plays a direct role in the translocation of protons across the membrane. This Crocosphaera subtropica (strain ATCC 51142 / BH68) (Cyanothece sp. (strain ATCC 51142)) protein is ATP synthase subunit a 2.